The primary structure comprises 249 residues: MSSVNVDFEQAGELKIGQVGIANLRIRTLDVPRLVREMQDRVTRAPKLFGRAAVILDFGGLAQTPDLATAKALLDGLRSAGVLPVALAYGTSEIDLLSQQLGIPLLAKFRAQYETAAVSPPPPPPPPPARAEPAAPVARPAPGRMQRNAVRSGQQLYAENCDLTVLSTVGAGAEVIADGSIHIYGTLRGRALAGAQGNPDARIFCRDFHAELVAIAGHYKVLDDVPMDLRGKAVQVWLEQDQIKIAALD.

The interval 116–149 (AAVSPPPPPPPPPARAEPAAPVARPAPGRMQRNA) is disordered. A compositionally biased stretch (pro residues) spans 119 to 130 (SPPPPPPPPPAR). The span at 131–142 (AEPAAPVARPAP) shows a compositional bias: low complexity.

Belongs to the MinC family. In terms of assembly, interacts with MinD and FtsZ.

Functionally, cell division inhibitor that blocks the formation of polar Z ring septums. Rapidly oscillates between the poles of the cell to destabilize FtsZ filaments that have formed before they mature into polar Z rings. Prevents FtsZ polymerization. In Xanthomonas campestris pv. campestris (strain B100), this protein is Probable septum site-determining protein MinC.